Reading from the N-terminus, the 205-residue chain is MQAPPSFYEGDTLEVAKKLLGQKLVHIVDGIKRSGIIVEVEAYKGPDDKAAHSYGGRRTDRTEVMFGAPGHAYVYLIYGMYHCFNVITAPVGTPQGVLIRALEPVDGIEEIKLARYNKTEITKAQYKNLTNGPGKLCRALGITLKERGVSLQSDTLHIELVPKEEHISSQYKITAGPRINIDYAEEAVHYPWRFYYEGHPFVSKK.

This sequence belongs to the DNA glycosylase MPG family.

In Bacillus cereus (strain ATCC 14579 / DSM 31 / CCUG 7414 / JCM 2152 / NBRC 15305 / NCIMB 9373 / NCTC 2599 / NRRL B-3711), this protein is Putative 3-methyladenine DNA glycosylase.